A 358-amino-acid chain; its full sequence is Probable G-protein coupled receptor 25 (358 aa).

The Extracellular portion of the chain corresponds to 1 to 43 (MQSTEPWSPSWGTLSWDYSGSGSLDQVELCPAWNLPYGHAIIP). The helical transmembrane segment at 44 to 64 (ALYLAAFAVGLPGNAFVVWLL) threads the bilayer. At 65-76 (SRQRGPRRLVDT) the chain is on the cytoplasmic side. Residues 77–97 (FVLHLAAADLGFVLTLPLWAA) form a helical membrane-spanning segment. Topologically, residues 98–113 (AEARGGLWPFGDGLCK) are extracellular. Cys-112 and Cys-191 form a disulfide bridge. Residues 114–134 (VSSFALAVTRCAGALLLAGMS) traverse the membrane as a helical segment. The Cytoplasmic portion of the chain corresponds to 135–155 (VDRYLAVGRPLSARPLRSARC). The chain crosses the membrane as a helical span at residues 156-176 (VRAVCGAAWAAAFLAGLPALL). The Extracellular portion of the chain corresponds to 177–200 (YRGLQPSLDGVGSQCAEEPWEALQ). The helical transmembrane segment at 201–221 (GVGLLLLLLTFALPLAVTLIC) threads the bilayer. Over 222 to 239 (YWRVSRRLPRVGRARSNS) the chain is Cytoplasmic. The chain crosses the membrane as a helical span at residues 240-260 (LRIIFTVESVFVGCWLPFGVL). Residues 261 to 284 (RSLFHLARLQALPLPCSLLLALRW) are Extracellular-facing. A helical transmembrane segment spans residues 285 to 307 (GLTVTTCLAFVNSSANPVIYLLL). Residues 308 to 358 (DRSFRARARFGLCARAGRQVRRISSASSLSRDDSSVFRGRSPKVNSASATW) are Cytoplasmic-facing. A disordered region spans residues 339–358 (DDSSVFRGRSPKVNSASATW).

It belongs to the G-protein coupled receptor 1 family.

It localises to the membrane. Functionally, orphan receptor. The chain is Probable G-protein coupled receptor 25 (Gpr25) from Mus musculus (Mouse).